The following is a 154-amino-acid chain: Insulin-like growth factor 1 (154 aa).

Positions 50–78 (GPETLCGAELVDALQFVCGDRGFYFNKPT) are b. 3 disulfide bridges follow: C55/C97, C67/C110, and C96/C101. The c stretch occupies residues 79–90 (GYGSSSRRAPQT). Positions 91-111 (GIVDECCFRSCDLRRLEMYCA) are a. Residues 112 to 119 (PLKPAKSA) form a d region. Positions 120–154 (RSVRAQRHTDMPKAQKEVHLKNTSRGSAGNKNYRM) are cleaved as a propeptide — e peptide. The disordered stretch occupies residues 121–154 (SVRAQRHTDMPKAQKEVHLKNTSRGSAGNKNYRM). Basic and acidic residues predominate over residues 126–139 (RHTDMPKAQKEVHL). Over residues 140–154 (KNTSRGSAGNKNYRM) the composition is skewed to polar residues.

Belongs to the insulin family. In terms of assembly, forms a ternary complex with IGFR1 and ITGAV:ITGB3. Forms a ternary complex with IGFR1 and ITGA6:ITGB4. Forms a ternary complex with IGFBP3 and ALS.

It is found in the secreted. The insulin-like growth factors, isolated from plasma, are structurally and functionally related to insulin but have a much higher growth-promoting activity. May be a physiological regulator of [1-14C]-2-deoxy-D-glucose (2DG) transport and glycogen synthesis in osteoblasts. Stimulates glucose transport in bone-derived osteoblastic (PyMS) cells and is effective at much lower concentrations than insulin, not only regarding glycogen and DNA synthesis but also with regard to enhancing glucose uptake. May play a role in synapse maturation. Ca(2+)-dependent exocytosis of IGF1 is required for sensory perception of smell in the olfactory bulb. Acts as a ligand for IGF1R. Binds to the alpha subunit of IGF1R, leading to the activation of the intrinsic tyrosine kinase activity which autophosphorylates tyrosine residues in the beta subunit thus initiating a cascade of down-stream signaling events leading to activation of the PI3K-AKT/PKB and the Ras-MAPK pathways. Binds to integrins ITGAV:ITGB3 and ITGA6:ITGB4. Its binding to integrins and subsequent ternary complex formation with integrins and IGFR1 are essential for IGF1 signaling. Induces the phosphorylation and activation of IGFR1, MAPK3/ERK1, MAPK1/ERK2 and AKT1. As part of the MAPK/ERK signaling pathway, acts as a negative regulator of apoptosis in cardiomyocytes via promotion of STUB1/CHIP-mediated ubiquitination and degradation of ICER-type isoforms of CREM. This is Insulin-like growth factor 1 from Bos taurus (Bovine).